We begin with the raw amino-acid sequence, 512 residues long: Gamma-aminobutyric acid receptor subunit beta-2 (512 aa).

The N-terminal stretch at 1–25 is a signal peptide; the sequence is MWRVRKRGYFGIWSFPLIIAAVCAQ. The Extracellular portion of the chain corresponds to 26 to 241; the sequence is SVNDPSNMSL…LSLSFKLKRN (216 aa). N-linked (GlcNAc...) asparagine glycosylation is found at N32 and N104. Y121 provides a ligand contact to histamine. C160 and C174 are disulfide-bonded. N173 carries an N-linked (GlcNAc...) asparagine glycan. Residues 180–181 and T226 contribute to the histamine site; that span reads SY. 4-aminobutanoate is bound by residues Y181 and T226. A helical transmembrane segment spans residues 242-262; sequence IGYFILQTYMPSILITILSWV. Residues 263 to 272 are Cytoplasmic-facing; it reads SFWINYDASA. Residues 273 to 292 form a helical membrane-spanning segment; that stretch reads ARVALGITTVLTMTTINTHL. At 293 to 310 the chain is on the extracellular side; that stretch reads RETLPKIPYVKAIDMYLM. A helical membrane pass occupies residues 311-331; sequence GCFVFVFMALLEYALVNYIFF. Residues 332–490 lie on the Cytoplasmic side of the membrane; it reads GRGPQRQKKA…LTDVNAIDRW (159 aa). At Y441 the chain carries Phosphotyrosine. Residues 491-511 traverse the membrane as a helical segment; it reads SRIFFPVVFSFFNIVYWLYYV. A topological domain (extracellular) is located at residue N512.

Belongs to the ligand-gated ion channel (TC 1.A.9) family. Gamma-aminobutyric acid receptor (TC 1.A.9.5) subfamily. GABRB2 sub-subfamily. In terms of assembly, heteropentamer, formed by a combination of alpha (GABRA1-6), beta (GABRB1-3), gamma (GABRG1-3), delta (GABRD), epsilon (GABRE), rho (GABRR1-3), pi (GABRP) and theta (GABRQ) chains, each subunit exhibiting distinct physiological and pharmacological properties. Interacts with UBQLN1. May interact with KIF21B. Identified in a complex of 720 kDa composed of LHFPL4, NLGN2, GABRA1, GABRB2, GABRG2 and GABRB3. As to expression, isoform 1 and isoform 2 show reduced expression in schizophrenic brain. Isoform 3 shows increased expression in schizophrenic and bipolar disorder brains while isoform 4 shows reduced expression.

Its subcellular location is the postsynaptic cell membrane. The protein localises to the cell membrane. It localises to the cytoplasmic vesicle membrane. It catalyses the reaction chloride(in) = chloride(out). Allosterically activated by benzodiazepines. Allosterically activated by the anesthetic etomidate. Inhibited by the antagonist bicuculline. Potentiated by histamine. Its function is as follows. Beta subunit of the heteropentameric ligand-gated chloride channel gated by gamma-aminobutyric acid (GABA), a major inhibitory neurotransmitter in the brain. GABA-gated chloride channels, also named GABA(A) receptors (GABAAR), consist of five subunits arranged around a central pore and contain GABA active binding site(s) located at the alpha and beta subunit interface(s). When activated by GABA, GABAARs selectively allow the flow of chloride anions across the cell membrane down their electrochemical gradient. Chloride influx into the postsynaptic neuron following GABAAR opening decreases the neuron ability to generate a new action potential, thereby reducing nerve transmission. GABAARs containing alpha-1 and beta-2 or -3 subunits exhibit synaptogenic activity; the gamma-2 subunit being necessary but not sufficient to induce rapid synaptic contacts formation. Extrasynaptic beta-2 receptors contribute to the tonic GABAergic inhibition. Beta-containing GABAARs can simultaneously bind GABA and histamine where histamine binds at the interface of two neighboring beta subunits, which may be involved in the regulation of sleep and wakefulness. The sequence is that of Gamma-aminobutyric acid receptor subunit beta-2 from Homo sapiens (Human).